The sequence spans 516 residues: Glucose-1-phosphate adenylyltransferase large subunit 1, chloroplastic/amyloplastic (516 aa).

Residues Met-1–Cys-45 constitute a chloroplast transit peptide.

This sequence belongs to the bacterial/plant glucose-1-phosphate adenylyltransferase family. Heterotetramer. As to expression, endosperm.

The protein localises to the plastid. It localises to the chloroplast. The protein resides in the amyloplast. It carries out the reaction alpha-D-glucose 1-phosphate + ATP + H(+) = ADP-alpha-D-glucose + diphosphate. Its pathway is glycan biosynthesis; starch biosynthesis. Activated by 3'phosphoglycerate, inhibited by orthophosphate. Allosteric regulation. In terms of biological role, this protein plays a role in synthesis of starch. It catalyzes the synthesis of the activated glycosyl donor, ADP-glucose from Glc-1-P and ATP. This is Glucose-1-phosphate adenylyltransferase large subunit 1, chloroplastic/amyloplastic (SH2) from Zea mays (Maize).